The sequence spans 116 residues: Peptidyl-tRNA hydrolase (116 aa).

Belongs to the PTH2 family.

It is found in the cytoplasm. The catalysed reaction is an N-acyl-L-alpha-aminoacyl-tRNA + H2O = an N-acyl-L-amino acid + a tRNA + H(+). In terms of biological role, the natural substrate for this enzyme may be peptidyl-tRNAs which drop off the ribosome during protein synthesis. The chain is Peptidyl-tRNA hydrolase from Methanococcus maripaludis (strain C6 / ATCC BAA-1332).